Consider the following 542-residue polypeptide: Multidrug transporter DTR1 (542 aa).

Residues Asn6 and Asn46 are each glycosylated (N-linked (GlcNAc...) asparagine). The helical transmembrane segment at Leu80–Ile100 threads the bilayer. Asn111 and Asn118 each carry an N-linked (GlcNAc...) asparagine glycan. 5 consecutive transmembrane segments (helical) span residues Ala119–Ala139, Ile146–Pro166, Ile169–Leu189, Phe210–Leu230, and Trp237–Leu257. Asn274 carries an N-linked (GlcNAc...) asparagine glycan. Helical transmembrane passes span Ile332–Tyr352, Ile374–His394, Ile419–Ile439, and Phe441–Trp461. The N-linked (GlcNAc...) asparagine glycan is linked to Asn463. 2 helical membrane passes run Ala481–Ala501 and Phe511–Ile531.

It belongs to the major facilitator superfamily. CAR1 family.

The protein resides in the cell membrane. Plasma membrane acetic acid exporter, relieving the stress induced upon cells within hemocytes, and thus enabling increased proliferation and virulence against Galleria mellonella larvae. Confers resistance to weak acid and oxidative stress, but not to antifungal drugs. This Candida glabrata (strain ATCC 2001 / BCRC 20586 / JCM 3761 / NBRC 0622 / NRRL Y-65 / CBS 138) (Yeast) protein is Multidrug transporter DTR1.